The sequence spans 208 residues: Small ribosomal subunit protein uS3 (208 aa).

The KH type-2 domain maps to 38–106 (IRDYIKARLY…EILIDIQEVR (69 aa)).

The protein belongs to the universal ribosomal protein uS3 family. Part of the 30S ribosomal subunit. Forms a tight complex with proteins S10 and S14.

Functionally, binds the lower part of the 30S subunit head. Binds mRNA in the 70S ribosome, positioning it for translation. This chain is Small ribosomal subunit protein uS3, found in Syntrophobacter fumaroxidans (strain DSM 10017 / MPOB).